The following is a 221-amino-acid chain: MALVVEDIVKNFGEGLSETKVLKGINFEVEQGEFVILNGASGSGKTTLLTILGGLLSQTSGTVLYNDTPLFDKQHRPSDLRLEDIGFIFQSSHLVPYLKVIEQLTLVGQEAGMTKQQSSKRAIQLLKNIGLEDRLNVYPHQLSGGEKQRVAIMRAFMNNPKIILADEPTASLDADRATKVVEMIRQQIKEQQMIGIMITHDRRLFEYADRVIELEDGKITD.

The ABC transporter domain occupies 3–221; the sequence is LVVEDIVKNF…IELEDGKITD (219 aa). 39-46 lines the ATP pocket; sequence GASGSGKT.

The protein belongs to the ABC transporter superfamily. HrtA family. The complex is composed of two ATP-binding proteins (HrtA), two transmembrane proteins (HrtB) and a solute-binding protein.

The protein localises to the cell membrane. Its function is as follows. Part of the ABC transporter complex hrt involved in hemin import. Responsible for energy coupling to the transport system. This Staphylococcus aureus (strain bovine RF122 / ET3-1) protein is Putative hemin import ATP-binding protein HrtA (hrtA).